The following is a 315-amino-acid chain: Olfactory receptor 2V2 (315 aa).

The Extracellular segment spans residues 1–26 (METWVNQSYTDGFFLLGIFSHSTADL). Asparagine 6 carries an N-linked (GlcNAc...) asparagine glycan. Residues 27 to 50 (VLFSVVMAVFTVALCGNVLLIFLI) traverse the membrane as a helical segment. Over 51–58 (YMDPHLHT) the chain is Cytoplasmic. Residues 59 to 80 (PMYFFLSQLSLMDLMLVCTNVP) form a helical membrane-spanning segment. The Extracellular segment spans residues 81–101 (KMAANFLSGRKSISFVGCGIQ). The cysteines at positions 98 and 190 are disulfide-linked. Residues 102–121 (IGLFVCLVGSEGLLLGLMAY) form a helical membrane-spanning segment. Residues 122 to 140 (DRYVAISHPLHYPILMNQR) lie on the Cytoplasmic side of the membrane. The chain crosses the membrane as a helical span at residues 141 to 159 (VCLQITGSSWAFGIIDGLI). Residues 160 to 196 (QMVVVMNFPYCGLRKVNHFFCEMLSLLKLACVDTSLF) are Extracellular-facing. A helical membrane pass occupies residues 197–220 (EKVIFACCVFMLLFPFSIIVASYA). At 221–237 (HILGTVLQMHSAQAWKK) the chain is on the cytoplasmic side. A helical membrane pass occupies residues 238-260 (ALATCSSHLTAVTLFYGAAMFIY). At 261-273 (LRPRHYRAPSHDK) the chain is on the extracellular side. A helical transmembrane segment spans residues 274–293 (VASIFYTVLTPMLNPLIYSL). At 294-315 (RNREVMGALRKGLDRCRIGSQH) the chain is on the cytoplasmic side.

Belongs to the G-protein coupled receptor 1 family.

It is found in the cell membrane. Its function is as follows. Odorant receptor. The protein is Olfactory receptor 2V2 (OR2V2) of Homo sapiens (Human).